A 178-amino-acid chain; its full sequence is CASP-like protein 5A1 (178 aa).

Residues Met-1–Val-11 are compositionally biased toward low complexity. A disordered region spans residues Met-1–Gly-25. At Met-1–Thr-37 the chain is on the cytoplasmic side. The chain crosses the membrane as a helical span at residues Ala-38 to Met-58. Residues Ala-59–Ser-69 lie on the Extracellular side of the membrane. A helical membrane pass occupies residues Phe-70 to Val-90. Residues Asp-91–Arg-105 are Cytoplasmic-facing. A helical membrane pass occupies residues Ala-106–Cys-126. Over Ala-127–Ser-152 the chain is Extracellular. Residues Ala-153–Trp-173 form a helical membrane-spanning segment. Topologically, residues Ser-174 to Gly-178 are cytoplasmic.

The protein belongs to the Casparian strip membrane proteins (CASP) family. Homodimer and heterodimers.

It is found in the cell membrane. The chain is CASP-like protein 5A1 from Oryza sativa subsp. japonica (Rice).